We begin with the raw amino-acid sequence, 130 residues long: Metastasis-suppressor KiSS-1 (130 aa).

The first 19 residues, 1-19, serve as a signal peptide directing secretion; sequence MISMASWQLLLLLCVATYG. The tract at residues 49–82 is disordered; sequence KESRYAESKPGSAGLRARRSSPCPPVEGPAGRQR. C71 and C85 form a disulfide bridge. Y110 is modified (phosphotyrosine). Positions 110–119 are essential for receptor binding and receptor activation; that stretch reads YNWNSFGLRY. A Tyrosine amide modification is found at Y119.

This sequence belongs to the KISS1 family. As to expression, weak in all tissue types with highest levels in lung and 15- 17-day embryos. Expressed in areas of the hypothalamus implicated in the neuroendocrine regulation of gonadotropin secretion, including the anteroventral periventricular nucleus, the periventricular nucleus, and the arcuate nucleus.

Its subcellular location is the secreted. In terms of biological role, metastasis suppressor protein. May regulate events downstream of cell-matrix adhesion, perhaps involving cytoskeletal reorganization. Generates a C-terminally amidated peptide, metastin which functions as the endogenous ligand of the G-protein coupled receptor GPR54. Activation of the receptor inhibits cell proliferation and cell migration, key characteristics of tumor metastasis. The receptor is also essential for normal gonadotropin-released hormone physiology and for puberty. The hypothalamic KiSS1/GPR54 system is a pivotal factor in central regulation of the gonadotropic axis at puberty and in adulthood. Intracerebroventricular administration induces an increase in serum LH and FSH levels in prepubertal male and female as well as in adult animals. This Mus musculus (Mouse) protein is Metastasis-suppressor KiSS-1 (Kiss1).